Reading from the N-terminus, the 282-residue chain is 2-dehydro-3-deoxyphosphooctonate aldolase (282 aa).

This sequence belongs to the KdsA family.

Its subcellular location is the cytoplasm. It carries out the reaction D-arabinose 5-phosphate + phosphoenolpyruvate + H2O = 3-deoxy-alpha-D-manno-2-octulosonate-8-phosphate + phosphate. Its pathway is carbohydrate biosynthesis; 3-deoxy-D-manno-octulosonate biosynthesis; 3-deoxy-D-manno-octulosonate from D-ribulose 5-phosphate: step 2/3. It participates in bacterial outer membrane biogenesis; lipopolysaccharide biosynthesis. In Shewanella sp. (strain W3-18-1), this protein is 2-dehydro-3-deoxyphosphooctonate aldolase.